A 380-amino-acid polypeptide reads, in one-letter code: Probable inactive reductase easA (380 aa).

Residues 25 to 27, A60, Q102, and H171 contribute to the FMN site; that span reads PMT. H171 and N174 together coordinate substrate. Residues K223, G299, 324–325, and R325 contribute to the FMN site; that span reads GR. Y352 contacts substrate.

This sequence belongs to the NADH:flavin oxidoreductase/NADH oxidase family.

Its function is as follows. Probable inactive dehydrogenase; part of the gene cluster that mediates the biosynthesis of fungal ergot alkaloid ergovaline, the predominant ergopeptine product in E.festucae var. lolii. DmaW catalyzes the first step of ergot alkaloid biosynthesis by condensing dimethylallyl diphosphate (DMAP) and tryptophan to form 4-dimethylallyl-L-tryptophan. The second step is catalyzed by the methyltransferase easF that methylates 4-dimethylallyl-L-tryptophan in the presence of S-adenosyl-L-methionine, resulting in the formation of 4-dimethylallyl-L-abrine. The catalase easC and the FAD-dependent oxidoreductase easE then transform 4-dimethylallyl-L-abrine to chanoclavine-I which is further oxidized by easD in the presence of NAD(+), resulting in the formation of chanoclavine-I aldehyde. Agroclavine dehydrogenase easG then mediates the conversion of chanoclavine-I aldehyde to agroclavine via a non-enzymatic adduct reaction: the substrate is an iminium intermediate that is formed spontaneously from chanoclavine-I aldehyde in the presence of glutathione. The presence of easA is not required to complete this reaction. Further conversion of agroclavine to paspalic acid is a two-step process involving oxidation of agroclavine to elymoclavine and of elymoclavine to paspalic acid, the second step being performed by the elymoclavine oxidase cloA. Paspalic acid is then further converted to D-lysergic acid. Ergovaline is assembled from D-lysergic acid and three different amino acids by the D-lysergyl-peptide-synthetase composed of a monomudular (lpsB) and a trimodular (lpsA) nonribosomal peptide synthetase subunit. This is Probable inactive reductase easA from Epichloe festucae var. lolii (Neotyphodium lolii).